A 350-amino-acid polypeptide reads, in one-letter code: Neutral protease 2 homolog SNOG_10522 (350 aa).

A signal peptide spans 1–18 (MKVSSQLAVAALASFATA). The propeptide occupies 19 to 180 (ASVDVHKRET…AKALNKRTAI (162 aa)). Disulfide bonds link C184–C251 and C258–C276. H301 serves as a coordination point for Zn(2+). E302 is an active-site residue. Zn(2+) contacts are provided by H305 and D316.

It belongs to the peptidase M35 family. Zn(2+) serves as cofactor.

Its subcellular location is the secreted. The enzyme catalyses Preferential cleavage of bonds with hydrophobic residues in P1'. Also 3-Asn-|-Gln-4 and 8-Gly-|-Ser-9 bonds in insulin B chain.. Its function is as follows. Secreted metalloproteinase that allows assimilation of proteinaceous substrates. Shows high activities on basic nuclear substrates such as histone and protamine. The polypeptide is Neutral protease 2 homolog SNOG_10522 (Phaeosphaeria nodorum (strain SN15 / ATCC MYA-4574 / FGSC 10173) (Glume blotch fungus)).